Reading from the N-terminus, the 106-residue chain is Probable NADP-dependent dehydrogenase in aabA 3'region (106 aa).

4–28 contacts NADP(+); it reads LITGASSGFGWEAAKLCVAKGHRVI.

The protein belongs to the short-chain dehydrogenases/reductases (SDR) family.

The chain is Probable NADP-dependent dehydrogenase in aabA 3'region from Dichelobacter nodosus (Bacteroides nodosus).